The chain runs to 409 residues: Na(+)-translocating NADH-quinone reductase subunit F (409 aa).

The chain crosses the membrane as a helical span at residues 5 to 25 (FIFGIIAFTALVLVLAVIILF). Positions 34 to 128 (GDITISINDD…SMDVELPEEI (95 aa)) constitute a 2Fe-2S ferredoxin-type domain. [2Fe-2S] cluster-binding residues include Cys71, Cys77, Cys80, and Cys112. The FAD-binding FR-type domain maps to 131–271 (VKKWECTVIS…SGPFGEFFAK (141 aa)).

Belongs to the NqrF family. In terms of assembly, composed of six subunits; NqrA, NqrB, NqrC, NqrD, NqrE and NqrF. [2Fe-2S] cluster is required as a cofactor. It depends on FAD as a cofactor.

It is found in the cell inner membrane. It carries out the reaction a ubiquinone + n Na(+)(in) + NADH + H(+) = a ubiquinol + n Na(+)(out) + NAD(+). Functionally, NQR complex catalyzes the reduction of ubiquinone-1 to ubiquinol by two successive reactions, coupled with the transport of Na(+) ions from the cytoplasm to the periplasm. The first step is catalyzed by NqrF, which accepts electrons from NADH and reduces ubiquinone-1 to ubisemiquinone by a one-electron transfer pathway. The sequence is that of Na(+)-translocating NADH-quinone reductase subunit F from Haemophilus ducreyi (strain 35000HP / ATCC 700724).